The primary structure comprises 173 residues: Peptidyl-prolyl cis-trans isomerase cyp3 (173 aa).

In terms of domain architecture, PPIase cyclophilin-type spans 8-172 (FMDIAIDGRL…SNVAIVECGE (165 aa)).

Belongs to the cyclophilin-type PPIase family. PPIase H subfamily.

The protein resides in the cytoplasm. It localises to the cytoskeleton. Its subcellular location is the microtubule organizing center. It is found in the spindle pole body. It catalyses the reaction [protein]-peptidylproline (omega=180) = [protein]-peptidylproline (omega=0). Functionally, PPIases accelerate the folding of proteins. It catalyzes the cis-trans isomerization of proline imidic peptide bonds in oligopeptides. The polypeptide is Peptidyl-prolyl cis-trans isomerase cyp3 (cyp3) (Schizosaccharomyces pombe (strain 972 / ATCC 24843) (Fission yeast)).